The following is a 215-amino-acid chain: MPTPIRTILLDIEGTVGSISFVKNVLFPLAKQQYAEYVHKHMDDASVRVFGNSLDEIVDKLNTLHDSGSKDQAFKALQGSIWKDAYENGKVVAHLFPDVVPLLKRAADKGVRVCIYSSGSVPAQKLYFHYSEYGDLSNYISEYYDTSIGPKVEADSYKRIVGSDDPATWLFLSDNVHELDAARQSGLKVGLAVRPGNEPVSSSGYSEYGSFDSLL.

Residues aspartate 11 and glutamate 13 each contribute to the Mg(2+) site. Residues 117-118 and lysine 151 contribute to the substrate site; that span reads SS. Position 174 (aspartate 174) interacts with Mg(2+).

It belongs to the HAD-like hydrolase superfamily. MasA/MtnC family. As to quaternary structure, monomer. Mg(2+) serves as cofactor.

The protein localises to the cytoplasm. It localises to the nucleus. It catalyses the reaction 5-methylsulfanyl-2,3-dioxopentyl phosphate + H2O = 1,2-dihydroxy-5-(methylsulfanyl)pent-1-en-3-one + phosphate. It functions in the pathway amino-acid biosynthesis; L-methionine biosynthesis via salvage pathway; L-methionine from S-methyl-5-thio-alpha-D-ribose 1-phosphate: step 3/6. The protein operates within amino-acid biosynthesis; L-methionine biosynthesis via salvage pathway; L-methionine from S-methyl-5-thio-alpha-D-ribose 1-phosphate: step 4/6. Its function is as follows. Bifunctional enzyme that catalyzes the enolization of 2,3-diketo-5-methylthiopentyl-1-phosphate (DK-MTP-1-P) into the intermediate 2-hydroxy-3-keto-5-methylthiopentenyl-1-phosphate (HK-MTPenyl-1-P), which is then dephosphorylated to form the acireductone 1,2-dihydroxy-3-keto-5-methylthiopentene (DHK-MTPene). The chain is Enolase-phosphatase E1 (utr4) from Schizosaccharomyces japonicus (strain yFS275 / FY16936) (Fission yeast).